A 353-amino-acid chain; its full sequence is Melanin-concentrating hormone receptor 1 (353 aa).

The Extracellular portion of the chain corresponds to 1–45 (MDLQASLLSTGPNASNISDGQDNFTLAGPPPRTRSVSYINIIMPS). N-linked (GlcNAc...) asparagine glycans are attached at residues Asn13, Asn16, and Asn23. The helical transmembrane segment at 46–66 (VFGTICLLGIVGNSTVIFAVV) threads the bilayer. Residues 67 to 79 (KKSKLHWCSNVPD) are Cytoplasmic-facing. Residues 80 to 100 (IFIINLSVVDLLFLLGMPFMI) form a helical membrane-spanning segment. The Extracellular segment spans residues 101 to 116 (HQLMGNGVWHFGETMC). Cys116 and Cys194 are oxidised to a cystine. The chain crosses the membrane as a helical span at residues 117-139 (TLITAMDANSQFTSTYILTAMAI). At 140–161 (DRYLATVHPISSTKFRKPSMAT) the chain is on the cytoplasmic side. A helical transmembrane segment spans residues 162–182 (LVICLLWALSFISITPVWLYA). At 183–204 (RLIPFPGGAVGCGIRLPNPDTD) the chain is on the extracellular side. Residues 205-225 (LYWFTLYQFFLAFALPFVVIT) form a helical membrane-spanning segment. Topologically, residues 226-256 (AAYVKILQRMTSSVAPASQRSIRLRTKRVTR) are cytoplasmic. A helical transmembrane segment spans residues 257–277 (TAIAICLVFFVCWAPYYVLQL). The Extracellular segment spans residues 278–294 (TQLSISRPTLTFVYLYN). Residues 295 to 315 (AAISLGYANSCLNPFVYIVLC) form a helical membrane-spanning segment. The Cytoplasmic portion of the chain corresponds to 316–353 (ETFRKRLVLSVKPAAQGQLRTVSNAQTADEERTESKGT).

Belongs to the G-protein coupled receptor 1 family. Interacts with NCDN. Expressed predominantly in the brain. Expression in brain is negatively regulated by leptin. Also found in the epithelium of the tongue and kidney.

The protein resides in the cell membrane. Functionally, receptor for melanin-concentrating hormone, coupled to both G proteins that inhibit adenylyl cyclase and G proteins that activate phosphoinositide hydrolysis. The protein is Melanin-concentrating hormone receptor 1 of Mus musculus (Mouse).